Reading from the N-terminus, the 367-residue chain is UDP-D-xylose:L-fucose alpha-1,3-D-xylosyltransferase (367 aa).

Over residues 1–10 (MAQKQQTLHQ) the composition is skewed to polar residues. The interval 1–21 (MAQKQQTLHQQRPFSSSPRSY) is disordered. The Cytoplasmic segment spans residues 1-35 (MAQKQQTLHQQRPFSSSPRSYSSISNRPIFLLSRN). Positions 12 to 21 (RPFSSSPRSY) are enriched in low complexity. A helical; Signal-anchor for type II membrane protein membrane pass occupies residues 36-56 (GLLLVLLALFLLLGVFLPWPG). At 57 to 367 (SPLLLFPNKV…ALESPLGKLQ (311 aa)) the chain is on the lumenal side. N-linked (GlcNAc...) asparagine glycosylation is found at Asn85, Asn98, and Asn173. The DXD motif motif lies at 196-198 (DVD). Residues Asn228 and Asn292 are each glycosylated (N-linked (GlcNAc...) asparagine).

The protein belongs to the glycosyltransferase 77 family. It depends on Mn(2+) as a cofactor. Requires Mg(2+) as cofactor. Post-translationally, glycosylated. In terms of tissue distribution, expressed in roots, rosette leaves, stems and flowers.

Its subcellular location is the golgi apparatus membrane. Catalyzes the transfer of D-xylose from UDP-alpha-D-xylose onto L-fucose. Probably involved in the biosynthesis of rhamnogalacturonan II (RG-II) through xylosylation of the internal fucose moiety of the A-chain of RG-II, a structurally complex pectic polysaccharide of the primary cell wall. RG-II is essential for the cell wall integrity of rapidly growing tissues such as roots and pollen tube growth and elongation. This is UDP-D-xylose:L-fucose alpha-1,3-D-xylosyltransferase from Arabidopsis thaliana (Mouse-ear cress).